The primary structure comprises 431 residues: Tyrosine--tRNA ligase (431 aa).

Position 34 (Tyr34) interacts with L-tyrosine. The 'HIGH' region signature appears at 39 to 48 (PTADSLHIGH). L-tyrosine-binding residues include Tyr171 and Gln175. The short motif at 231 to 235 (KFGKT) is the 'KMSKS' region element. ATP is bound at residue Lys234. Residues 353–422 (INVVEALVKT…GKYTILRRGK (70 aa)) form the S4 RNA-binding domain.

Belongs to the class-I aminoacyl-tRNA synthetase family. TyrS type 1 subfamily. In terms of assembly, homodimer.

Its subcellular location is the cytoplasm. It carries out the reaction tRNA(Tyr) + L-tyrosine + ATP = L-tyrosyl-tRNA(Tyr) + AMP + diphosphate + H(+). In terms of biological role, catalyzes the attachment of tyrosine to tRNA(Tyr) in a two-step reaction: tyrosine is first activated by ATP to form Tyr-AMP and then transferred to the acceptor end of tRNA(Tyr). This chain is Tyrosine--tRNA ligase, found in Neisseria meningitidis serogroup C (strain 053442).